Reading from the N-terminus, the 135-residue chain is Large ribosomal subunit protein eL27x (135 aa).

Belongs to the eukaryotic ribosomal protein eL27 family.

The sequence is that of Large ribosomal subunit protein eL27x (RPL27C) from Arabidopsis thaliana (Mouse-ear cress).